The following is a 144-amino-acid chain: Large-conductance mechanosensitive channel (144 aa).

Transmembrane regions (helical) follow at residues 16 to 36 (VIDLAVGVIIGAAFGKIVDSV) and 86 to 106 (GNFLTIVVNFVILAFIIFMMV).

The protein belongs to the MscL family. As to quaternary structure, homopentamer.

The protein resides in the cell inner membrane. Its function is as follows. Channel that opens in response to stretch forces in the membrane lipid bilayer. May participate in the regulation of osmotic pressure changes within the cell. This Cupriavidus metallidurans (strain ATCC 43123 / DSM 2839 / NBRC 102507 / CH34) (Ralstonia metallidurans) protein is Large-conductance mechanosensitive channel.